We begin with the raw amino-acid sequence, 404 residues long: S-adenosylmethionine synthase (404 aa).

Histidine 17 is a binding site for ATP. Aspartate 19 is a binding site for Mg(2+). K(+) is bound at residue glutamate 45. Glutamate 58 and glutamine 101 together coordinate L-methionine. The flexible loop stretch occupies residues 101-111 (QSADINRGVDR). ATP-binding positions include 172–174 (DAK), 245–246 (RF), aspartate 254, 260–261 (RK), alanine 277, and lysine 281. Aspartate 254 contributes to the L-methionine binding site. Lysine 285 is a binding site for L-methionine.

This sequence belongs to the AdoMet synthase family. As to quaternary structure, homotetramer; dimer of dimers. The cofactor is Mg(2+). It depends on K(+) as a cofactor.

The protein localises to the cytoplasm. The catalysed reaction is L-methionine + ATP + H2O = S-adenosyl-L-methionine + phosphate + diphosphate. It functions in the pathway amino-acid biosynthesis; S-adenosyl-L-methionine biosynthesis; S-adenosyl-L-methionine from L-methionine: step 1/1. Functionally, catalyzes the formation of S-adenosylmethionine (AdoMet) from methionine and ATP. The overall synthetic reaction is composed of two sequential steps, AdoMet formation and the subsequent tripolyphosphate hydrolysis which occurs prior to release of AdoMet from the enzyme. This chain is S-adenosylmethionine synthase, found in Chlorobium luteolum (strain DSM 273 / BCRC 81028 / 2530) (Pelodictyon luteolum).